Consider the following 313-residue polypeptide: Beta-ketoacyl-[acyl-carrier-protein] synthase III (313 aa).

Active-site residues include cysteine 112 and histidine 238. The tract at residues 239-243 (QANIR) is ACP-binding. Asparagine 268 is a catalytic residue.

Belongs to the thiolase-like superfamily. FabH family. Homodimer.

The protein resides in the cytoplasm. It catalyses the reaction malonyl-[ACP] + acetyl-CoA + H(+) = 3-oxobutanoyl-[ACP] + CO2 + CoA. It participates in lipid metabolism; fatty acid biosynthesis. In terms of biological role, catalyzes the condensation reaction of fatty acid synthesis by the addition to an acyl acceptor of two carbons from malonyl-ACP. Catalyzes the first condensation reaction which initiates fatty acid synthesis and may therefore play a role in governing the total rate of fatty acid production. Possesses both acetoacetyl-ACP synthase and acetyl transacylase activities. Its substrate specificity determines the biosynthesis of branched-chain and/or straight-chain of fatty acids. The protein is Beta-ketoacyl-[acyl-carrier-protein] synthase III of Staphylococcus aureus (strain bovine RF122 / ET3-1).